The primary structure comprises 470 residues: Cysteine--tRNA ligase (470 aa).

Position 28 (Cys-28) interacts with Zn(2+). A 'HIGH' region motif is present at residues 30 to 40 (PTVYNYIHIGN). Residues Cys-212, His-237, and Glu-241 each contribute to the Zn(2+) site. The 'KMSKS' region signature appears at 271–275 (KMSKS). An ATP-binding site is contributed by Lys-274.

This sequence belongs to the class-I aminoacyl-tRNA synthetase family. Monomer. It depends on Zn(2+) as a cofactor.

Its subcellular location is the cytoplasm. It catalyses the reaction tRNA(Cys) + L-cysteine + ATP = L-cysteinyl-tRNA(Cys) + AMP + diphosphate. The protein is Cysteine--tRNA ligase of Levilactobacillus brevis (strain ATCC 367 / BCRC 12310 / CIP 105137 / JCM 1170 / LMG 11437 / NCIMB 947 / NCTC 947) (Lactobacillus brevis).